A 138-amino-acid chain; its full sequence is Translation initiation factor 5A (138 aa).

Position 37 is a hypusine (Lys37).

The protein belongs to the eIF-5A family.

The protein localises to the cytoplasm. Functionally, functions by promoting the formation of the first peptide bond. In Pyrococcus horikoshii (strain ATCC 700860 / DSM 12428 / JCM 9974 / NBRC 100139 / OT-3), this protein is Translation initiation factor 5A (eif5a).